The sequence spans 208 residues: 28 kDa heat- and acid-stable phosphoprotein homolog (208 aa).

2 disordered regions span residues 1 to 133 and 145 to 208; these read MAGG…VTKK and LSRR…LGLA. A compositionally biased stretch (basic and acidic residues) spans 16–44; that stretch reads FGRDYERSKGKISRDRVYDEEDIIKRNQE. 2 stretches are compositionally biased toward low complexity: residues 52–69 and 84–100; these read GSES…NKSK and RNPN…PTTK. The span at 105–121 shows a compositional bias: acidic residues; the sequence is SDSEDDSDKESDSEDEI. Residues 137 to 206 are a coiled coil; it reads INVNAKVELS…EKMAERRRLG (70 aa). Basic and acidic residues-rich tracts occupy residues 145 to 154 and 162 to 208; these read LSRREKEELA and QNEK…LGLA.

The protein belongs to the PDAP1 family.

The protein is 28 kDa heat- and acid-stable phosphoprotein homolog of Dictyostelium discoideum (Social amoeba).